Reading from the N-terminus, the 419-residue chain is Tyrosine--tRNA ligase (419 aa).

Y42 contacts L-tyrosine. Positions 47-56 match the 'HIGH' region motif; that stretch reads ATAPSLHVGS. Positions 179 and 183 each coordinate L-tyrosine. The 'KMSKS' region signature appears at 239 to 243; that stretch reads KMGKT. Residue K242 participates in ATP binding. The region spanning 353–418 is the S4 RNA-binding domain; it reads IVLANLFADA…GKKKIVLVKP (66 aa).

It belongs to the class-I aminoacyl-tRNA synthetase family. TyrS type 1 subfamily. Homodimer.

The protein resides in the cytoplasm. The catalysed reaction is tRNA(Tyr) + L-tyrosine + ATP = L-tyrosyl-tRNA(Tyr) + AMP + diphosphate + H(+). Its function is as follows. Catalyzes the attachment of tyrosine to tRNA(Tyr) in a two-step reaction: tyrosine is first activated by ATP to form Tyr-AMP and then transferred to the acceptor end of tRNA(Tyr). The protein is Tyrosine--tRNA ligase of Caulobacter sp. (strain K31).